A 138-amino-acid polypeptide reads, in one-letter code: Small ribosomal subunit protein uS11c (138 aa).

The interval Met-1–Arg-23 is disordered. Residues Gly-9 to Arg-23 are compositionally biased toward basic residues.

It belongs to the universal ribosomal protein uS11 family. In terms of assembly, part of the 30S ribosomal subunit.

Its subcellular location is the plastid. It is found in the chloroplast. The polypeptide is Small ribosomal subunit protein uS11c (Coffea arabica (Arabian coffee)).